Reading from the N-terminus, the 315-residue chain is MTQFQIECVESKVESSCNQYGRFIVEPLEPGQGITIGNSLRRVLLSDIEGSAITAVRIAGVNHEFCSIPGVKEDVLELLLNLKNIVLKSYTNEPQIGRLKIQGACKVTTANFELPSEVEIIHGTQYVATVAENAILEMEFKIEKGRGYKIIDKKQTENSIDFLPIDAIFMPVRKVNYMVEEIFLRNSEIKERLILEIWRNGSVTPQDSISQAAEVLLNLFNPFKKINFENTDDSTEQTEDKISQIPIEELQLSVRAYNCLKRAQIHSIGDLLNVSQEELLEIRNFGQKSAKEVIDALQKRLGISLPKRKTNKKEN.

The segment at 1–227 (MTQFQIECVE…NLFNPFKKIN (227 aa)) is alpha N-terminal domain (alpha-NTD). The tract at residues 239–315 (EDKISQIPIE…PKRKTNKKEN (77 aa)) is alpha C-terminal domain (alpha-CTD).

The protein belongs to the RNA polymerase alpha chain family. In terms of assembly, in plastids the minimal PEP RNA polymerase catalytic core is composed of four subunits: alpha, beta, beta', and beta''. When a (nuclear-encoded) sigma factor is associated with the core the holoenzyme is formed, which can initiate transcription.

The protein localises to the plastid. It localises to the cyanelle. The enzyme catalyses RNA(n) + a ribonucleoside 5'-triphosphate = RNA(n+1) + diphosphate. In terms of biological role, DNA-dependent RNA polymerase catalyzes the transcription of DNA into RNA using the four ribonucleoside triphosphates as substrates. In Cyanophora paradoxa, this protein is DNA-directed RNA polymerase subunit alpha.